Here is a 332-residue protein sequence, read N- to C-terminus: Glycerol-3-phosphate dehydrogenase [NAD(P)+] (332 aa).

Residues Ser11, Trp12, Arg32, Arg33, and Lys106 each contribute to the NADPH site. The sn-glycerol 3-phosphate site is built by Lys106 and Gly136. Ala140 contacts NADPH. Sn-glycerol 3-phosphate is bound by residues Lys191, Asp244, Ser254, Arg255, and Asn256. The Proton acceptor role is filled by Lys191. Residue Arg255 coordinates NADPH. Positions 280 and 282 each coordinate NADPH.

Belongs to the NAD-dependent glycerol-3-phosphate dehydrogenase family.

Its subcellular location is the cytoplasm. The catalysed reaction is sn-glycerol 3-phosphate + NAD(+) = dihydroxyacetone phosphate + NADH + H(+). It carries out the reaction sn-glycerol 3-phosphate + NADP(+) = dihydroxyacetone phosphate + NADPH + H(+). It functions in the pathway membrane lipid metabolism; glycerophospholipid metabolism. In terms of biological role, catalyzes the reduction of the glycolytic intermediate dihydroxyacetone phosphate (DHAP) to sn-glycerol 3-phosphate (G3P), the key precursor for phospholipid synthesis. This Corynebacterium glutamicum (strain R) protein is Glycerol-3-phosphate dehydrogenase [NAD(P)+].